The primary structure comprises 114 residues: MDPFSQLSQLQQNLQAMTKTVAGLENDMLEVLKENTELKVENQLLREKISKLDANKEPAENKSQAGLKSLRNIYDSGYHICNMYYGSHRESGEDCMFCLDILDNFVNHGQKNRG.

Residues histidine 79, cysteine 81, cysteine 95, and cysteine 98 each contribute to the Zn(2+) site.

This sequence belongs to the YabA family. As to quaternary structure, homotetramer. Interacts with both DnaA and DnaN, acting as a bridge between these two proteins. Requires Zn(2+) as cofactor.

The protein localises to the cytoplasm. The protein resides in the nucleoid. In terms of biological role, involved in control of chromosome replication initiation. Inhibits the cooperative binding of DnaA to the oriC region, thus negatively regulating initiation of chromosome replication. Inhibits the ability of DnaA-ATP to form a helix on DNA; does not disassemble preformed DnaA-DNA helices. Decreases the residence time of DnaA on the chromosome at its binding sites (oriC, replication forks and promoter-binding sites). Tethers DnaA to the replication machinery via the DNA polymerase beta sliding clamp subunit (dnaN). Associates with oriC and other DnaA targets on the chromosome in a DnaA-dependent manner. The chain is Replication initiation control protein YabA from Lactobacillus gasseri (strain ATCC 33323 / DSM 20243 / BCRC 14619 / CIP 102991 / JCM 1131 / KCTC 3163 / NCIMB 11718 / NCTC 13722 / AM63).